The primary structure comprises 94 residues: MLKPLGDRIVIEVVKKEETTLGGIVLPGSAKEKPQEGKVVAVGTGRVTEQGVRVPLEVNVGDHVIYAQYAGSEVKVDGNEYLILRESDILAVAN.

Belongs to the GroES chaperonin family. In terms of assembly, heptamer of 7 subunits arranged in a ring. Interacts with the chaperonin GroEL.

The protein localises to the cytoplasm. Together with the chaperonin GroEL, plays an essential role in assisting protein folding. The GroEL-GroES system forms a nano-cage that allows encapsulation of the non-native substrate proteins and provides a physical environment optimized to promote and accelerate protein folding. GroES binds to the apical surface of the GroEL ring, thereby capping the opening of the GroEL channel. In Exiguobacterium sibiricum (strain DSM 17290 / CCUG 55495 / CIP 109462 / JCM 13490 / 255-15), this protein is Co-chaperonin GroES.